The following is a 1034-amino-acid chain: Isoleucine--tRNA ligase (1034 aa).

The 'HIGH' region signature appears at 48 to 58 (PTANGKPHIGH). A 'KMSKS' region motif is present at residues 588 to 592 (KMSKH). Residue lysine 591 coordinates ATP.

Belongs to the class-I aminoacyl-tRNA synthetase family. IleS type 2 subfamily. As to quaternary structure, monomer. Zn(2+) is required as a cofactor.

Its subcellular location is the cytoplasm. The catalysed reaction is tRNA(Ile) + L-isoleucine + ATP = L-isoleucyl-tRNA(Ile) + AMP + diphosphate. Its function is as follows. Catalyzes the attachment of isoleucine to tRNA(Ile). As IleRS can inadvertently accommodate and process structurally similar amino acids such as valine, to avoid such errors it has two additional distinct tRNA(Ile)-dependent editing activities. One activity is designated as 'pretransfer' editing and involves the hydrolysis of activated Val-AMP. The other activity is designated 'posttransfer' editing and involves deacylation of mischarged Val-tRNA(Ile). This chain is Isoleucine--tRNA ligase, found in Clostridium kluyveri (strain ATCC 8527 / DSM 555 / NBRC 12016 / NCIMB 10680 / K1).